Reading from the N-terminus, the 166-residue chain is Putative 4-hydroxy-4-methyl-2-oxoglutarate aldolase (166 aa).

Residues 81–84 (GDII) and R103 contribute to the substrate site. D104 is an a divalent metal cation binding site.

The protein belongs to the class II aldolase/RraA-like family. In terms of assembly, homotrimer. It depends on a divalent metal cation as a cofactor.

The enzyme catalyses 4-hydroxy-4-methyl-2-oxoglutarate = 2 pyruvate. It carries out the reaction oxaloacetate + H(+) = pyruvate + CO2. Catalyzes the aldol cleavage of 4-hydroxy-4-methyl-2-oxoglutarate (HMG) into 2 molecules of pyruvate. Also contains a secondary oxaloacetate (OAA) decarboxylase activity due to the common pyruvate enolate transition state formed following C-C bond cleavage in the retro-aldol and decarboxylation reactions. In Corynebacterium glutamicum (strain ATCC 13032 / DSM 20300 / JCM 1318 / BCRC 11384 / CCUG 27702 / LMG 3730 / NBRC 12168 / NCIMB 10025 / NRRL B-2784 / 534), this protein is Putative 4-hydroxy-4-methyl-2-oxoglutarate aldolase.